The chain runs to 167 residues: 6,7-dimethyl-8-ribityllumazine synthase (167 aa).

5-amino-6-(D-ribitylamino)uracil is bound by residues Phe-24, 58-60 (ALE), and 82-84 (AVV). 87-88 (ET) contributes to the (2S)-2-hydroxy-3-oxobutyl phosphate binding site. Residue His-90 is the Proton donor of the active site. Asn-115 contacts 5-amino-6-(D-ribitylamino)uracil. Residue Arg-129 coordinates (2S)-2-hydroxy-3-oxobutyl phosphate.

This sequence belongs to the DMRL synthase family.

The enzyme catalyses (2S)-2-hydroxy-3-oxobutyl phosphate + 5-amino-6-(D-ribitylamino)uracil = 6,7-dimethyl-8-(1-D-ribityl)lumazine + phosphate + 2 H2O + H(+). It participates in cofactor biosynthesis; riboflavin biosynthesis; riboflavin from 2-hydroxy-3-oxobutyl phosphate and 5-amino-6-(D-ribitylamino)uracil: step 1/2. Catalyzes the formation of 6,7-dimethyl-8-ribityllumazine by condensation of 5-amino-6-(D-ribitylamino)uracil with 3,4-dihydroxy-2-butanone 4-phosphate. This is the penultimate step in the biosynthesis of riboflavin. The sequence is that of 6,7-dimethyl-8-ribityllumazine synthase from Cupriavidus pinatubonensis (strain JMP 134 / LMG 1197) (Cupriavidus necator (strain JMP 134)).